We begin with the raw amino-acid sequence, 807 residues long: Glycerol-3-phosphate acyltransferase (807 aa).

The short motif at 308 to 313 (CHRSHM) is the HXXXXD motif element.

Belongs to the GPAT/DAPAT family.

It is found in the cell inner membrane. The catalysed reaction is sn-glycerol 3-phosphate + an acyl-CoA = a 1-acyl-sn-glycero-3-phosphate + CoA. The protein operates within phospholipid metabolism; CDP-diacylglycerol biosynthesis; CDP-diacylglycerol from sn-glycerol 3-phosphate: step 1/3. The polypeptide is Glycerol-3-phosphate acyltransferase (Shewanella baltica (strain OS223)).